The sequence spans 191 residues: MSKPITFVTGNAKKLEELVAILGPSFPRTIVSKKIDLPELQGDIDEIAIKKCKEAARQVNGPVLVEDTSLCFNALEGLPGPYIKWFLEKLQPEGLHRLLHGWENKSAQAICTFGYCDGVDAEPLIFKGITEGVIVEPRGPRDFGWDPVFQPSGYDKTYAELPKSEKNTISHRYRALALLRQHFEKQDKLIN.

9–14 (TGNAKK) contributes to the ITP binding site. Position 39 (E39) interacts with Mg(2+). ITP contacts are provided by residues K51, 67 to 68 (DT), K84, 143 to 146 (FGWD), K166, and 171 to 172 (HR).

The protein belongs to the HAM1 NTPase family. As to quaternary structure, homodimer. Requires Mg(2+) as cofactor. Mn(2+) is required as a cofactor.

The protein localises to the cytoplasm. It catalyses the reaction ITP + H2O = IMP + diphosphate + H(+). The enzyme catalyses dITP + H2O = dIMP + diphosphate + H(+). It carries out the reaction XTP + H2O = XMP + diphosphate + H(+). Its function is as follows. Pyrophosphatase that hydrolyzes non-canonical purine nucleotides such as inosine triphosphate (ITP), deoxyinosine triphosphate (dITP) or xanthosine 5'-triphosphate (XTP) to their respective monophosphate derivatives. The enzyme does not distinguish between the deoxy- and ribose forms. Probably excludes non-canonical purines from RNA and DNA precursor pools, thus preventing their incorporation into RNA and DNA and avoiding chromosomal lesions. The sequence is that of Inosine triphosphate pyrophosphatase from Drosophila melanogaster (Fruit fly).